The chain runs to 361 residues: Anhydro-N-acetylmuramic acid kinase (361 aa).

10–17 contributes to the ATP binding site; that stretch reads GTSLDGVD.

The protein belongs to the anhydro-N-acetylmuramic acid kinase family.

It carries out the reaction 1,6-anhydro-N-acetyl-beta-muramate + ATP + H2O = N-acetyl-D-muramate 6-phosphate + ADP + H(+). The protein operates within amino-sugar metabolism; 1,6-anhydro-N-acetylmuramate degradation. It participates in cell wall biogenesis; peptidoglycan recycling. In terms of biological role, catalyzes the specific phosphorylation of 1,6-anhydro-N-acetylmuramic acid (anhMurNAc) with the simultaneous cleavage of the 1,6-anhydro ring, generating MurNAc-6-P. Is required for the utilization of anhMurNAc either imported from the medium or derived from its own cell wall murein, and thus plays a role in cell wall recycling. The polypeptide is Anhydro-N-acetylmuramic acid kinase (Gluconobacter oxydans (strain 621H) (Gluconobacter suboxydans)).